The following is a 553-amino-acid chain: Glutamate--tRNA ligase (553 aa).

The 'HIGH' region motif lies at 98–108 (PNPSGPLHIGH).

It belongs to the class-I aminoacyl-tRNA synthetase family. Glutamate--tRNA ligase type 2 subfamily.

The protein resides in the cytoplasm. The catalysed reaction is tRNA(Glu) + L-glutamate + ATP = L-glutamyl-tRNA(Glu) + AMP + diphosphate. Its function is as follows. Catalyzes the attachment of glutamate to tRNA(Glu) in a two-step reaction: glutamate is first activated by ATP to form Glu-AMP and then transferred to the acceptor end of tRNA(Glu). The protein is Glutamate--tRNA ligase of Methanocaldococcus jannaschii (strain ATCC 43067 / DSM 2661 / JAL-1 / JCM 10045 / NBRC 100440) (Methanococcus jannaschii).